Here is a 622-residue protein sequence, read N- to C-terminus: Chaperone protein HscA homolog (622 aa).

This sequence belongs to the heat shock protein 70 family.

Functionally, chaperone involved in the maturation of iron-sulfur cluster-containing proteins. Has a low intrinsic ATPase activity which is markedly stimulated by HscB. This Burkholderia pseudomallei (strain K96243) protein is Chaperone protein HscA homolog.